Here is a 182-residue protein sequence, read N- to C-terminus: Segregation and condensation protein B (182 aa).

Belongs to the ScpB family. In terms of assembly, homodimer. Homodimerization may be required to stabilize the binding of ScpA to the Smc head domains. Component of a cohesin-like complex composed of ScpA, ScpB and the Smc homodimer, in which ScpA and ScpB bind to the head domain of Smc. The presence of the three proteins is required for the association of the complex with DNA.

The protein localises to the cytoplasm. Participates in chromosomal partition during cell division. May act via the formation of a condensin-like complex containing Smc and ScpA that pull DNA away from mid-cell into both cell halves. This Staphylococcus saprophyticus subsp. saprophyticus (strain ATCC 15305 / DSM 20229 / NCIMB 8711 / NCTC 7292 / S-41) protein is Segregation and condensation protein B.